The following is a 159-amino-acid chain: MRIGHGFDVHAFGGEGPIIIGGVRIPYEKGLLAHSDGDVALHALTDALLGAAALGDIGKLFPDTDPAFKGADSRELLREAWRRIQAKGYTLGNVDVTIIAQAPKMLPHIPRMRVFIAEDLGCHMDDVNVKATTTEKLGFTGRGEGIACEAVALLMKAAK.

2 residues coordinate a divalent metal cation: aspartate 8 and histidine 10. Residues 8–10 (DVH) and 34–35 (HS) contribute to the 4-CDP-2-C-methyl-D-erythritol 2-phosphate site. Histidine 42 lines the a divalent metal cation pocket. 4-CDP-2-C-methyl-D-erythritol 2-phosphate contacts are provided by residues 56–58 (DIG), 61–65 (FPDTD), 100–106 (AQAPKML), 132–135 (TTTE), phenylalanine 139, and arginine 142.

It belongs to the IspF family. In terms of assembly, homotrimer. It depends on a divalent metal cation as a cofactor.

The catalysed reaction is 4-CDP-2-C-methyl-D-erythritol 2-phosphate = 2-C-methyl-D-erythritol 2,4-cyclic diphosphate + CMP. Its pathway is isoprenoid biosynthesis; isopentenyl diphosphate biosynthesis via DXP pathway; isopentenyl diphosphate from 1-deoxy-D-xylulose 5-phosphate: step 4/6. Its function is as follows. Involved in the biosynthesis of isopentenyl diphosphate (IPP) and dimethylallyl diphosphate (DMAPP), two major building blocks of isoprenoid compounds. Catalyzes the conversion of 4-diphosphocytidyl-2-C-methyl-D-erythritol 2-phosphate (CDP-ME2P) to 2-C-methyl-D-erythritol 2,4-cyclodiphosphate (ME-CPP) with a corresponding release of cytidine 5-monophosphate (CMP). The sequence is that of 2-C-methyl-D-erythritol 2,4-cyclodiphosphate synthase from Salmonella choleraesuis (strain SC-B67).